Here is a 98-residue protein sequence, read N- to C-terminus: Acylphosphatase (98 aa).

The region spanning 12-98 (TYYVRVRGVV…DKRFERFQQH (87 aa)) is the Acylphosphatase-like domain. Residues Arg27 and Asn45 contribute to the active site.

It belongs to the acylphosphatase family.

It catalyses the reaction an acyl phosphate + H2O = a carboxylate + phosphate + H(+). The sequence is that of Acylphosphatase (acyP) from Burkholderia thailandensis (strain ATCC 700388 / DSM 13276 / CCUG 48851 / CIP 106301 / E264).